The chain runs to 407 residues: Argininosuccinate synthase (407 aa).

ATP contacts are provided by residues 16-24 (AYSGGLDTS) and Ala-44. L-citrulline-binding residues include Tyr-96 and Ser-101. Gly-126 lines the ATP pocket. 3 residues coordinate L-aspartate: Thr-128, Asn-132, and Asp-133. An L-citrulline-binding site is contributed by Asn-132. Residues Arg-136, Ser-185, Ser-194, Glu-270, and Tyr-282 each contribute to the L-citrulline site.

Belongs to the argininosuccinate synthase family. Type 1 subfamily. As to quaternary structure, homotetramer.

Its subcellular location is the cytoplasm. It catalyses the reaction L-citrulline + L-aspartate + ATP = 2-(N(omega)-L-arginino)succinate + AMP + diphosphate + H(+). It functions in the pathway amino-acid biosynthesis; L-arginine biosynthesis; L-arginine from L-ornithine and carbamoyl phosphate: step 2/3. The sequence is that of Argininosuccinate synthase from Shewanella sediminis (strain HAW-EB3).